The chain runs to 95 residues: Co-chaperonin GroES (95 aa).

The protein belongs to the GroES chaperonin family. In terms of assembly, heptamer of 7 subunits arranged in a ring. Interacts with the chaperonin GroEL.

It is found in the cytoplasm. In terms of biological role, together with the chaperonin GroEL, plays an essential role in assisting protein folding. The GroEL-GroES system forms a nano-cage that allows encapsulation of the non-native substrate proteins and provides a physical environment optimized to promote and accelerate protein folding. GroES binds to the apical surface of the GroEL ring, thereby capping the opening of the GroEL channel. The polypeptide is Co-chaperonin GroES (Staphylococcus saprophyticus subsp. saprophyticus (strain ATCC 15305 / DSM 20229 / NCIMB 8711 / NCTC 7292 / S-41)).